The chain runs to 407 residues: MTIESTNSFVVPSDTELIDVTPLGSTKLFQPIKVGNNVLPQRIAYVPTTRFRASKDHIPSDLQLNYYNARSQYPGTLIITEATFASERGGIDLHVPGIYNDAQAKSWKKINEAIHGNGSFSSVQLWYLGRVANAKDLKDSGLPLIAPSAVYWDENSEKLAKEAGNELRALTEEEIDHIVEVEYPNAAKHALEAGFDYVEIHGAHGYLLDQFLNLASNKRTDKYGCGSIENRARLLLRVVDKLIEVVGANRLALRLSPWASFQGMEIEGEEIHSYILQQLQQRADNGQQLAYISLVEPRVTGIYDVSLKDQQGRSNEFAYKIWKGNFIRAGNYTYDAPEFKTLINDLKNDRTIIGFSRFFTSNPDLVEKLKLGKPLNYYNREEFYKYYNYGYNSYDESEKQVIGKPLA.

FMN-binding residues include T49 and Q124. The Proton donor role is filled by Y206. FMN-binding residues include R254 and R357.

It belongs to the NADH:flavin oxidoreductase/NADH oxidase family. The cofactor is FMN.

The catalysed reaction is A + NADPH + H(+) = AH2 + NADP(+). Functionally, oxidoreductase that binds mammalian estrogens with high affinity. This Candida albicans (strain SC5314 / ATCC MYA-2876) (Yeast) protein is Probable NADPH dehydrogenase.